The following is a 441-amino-acid chain: Probable acetylornithine aminotransferase, mitochondrial (441 aa).

Lys294 carries the post-translational modification N6-(pyridoxal phosphate)lysine.

It belongs to the class-III pyridoxal-phosphate-dependent aminotransferase family. It depends on pyridoxal 5'-phosphate as a cofactor.

The protein localises to the mitochondrion matrix. It carries out the reaction N(2)-acetyl-L-ornithine + 2-oxoglutarate = N-acetyl-L-glutamate 5-semialdehyde + L-glutamate. Its pathway is amino-acid biosynthesis; L-arginine biosynthesis; N(2)-acetyl-L-ornithine from L-glutamate: step 4/4. This chain is Probable acetylornithine aminotransferase, mitochondrial (arg1), found in Schizosaccharomyces pombe (strain 972 / ATCC 24843) (Fission yeast).